The following is a 435-amino-acid chain: E3 ubiquitin-protein ligase PUB22 (435 aa).

Residues 6-81 (EIPSFFLCPI…QSWCTLNASY (76 aa)) form the U-box domain.

In terms of assembly, interacts with RPN12A. Binds to EXO70B2. Auto-ubiquitinated leading to degradation via the 26S proteasome. This Auto-ubiquitination is repressed by the bacterial elicitor flg22 thus leading to a transiently increased protein stabilization and accumulation.

It is found in the cytoplasm. The catalysed reaction is S-ubiquitinyl-[E2 ubiquitin-conjugating enzyme]-L-cysteine + [acceptor protein]-L-lysine = [E2 ubiquitin-conjugating enzyme]-L-cysteine + N(6)-ubiquitinyl-[acceptor protein]-L-lysine.. Its pathway is protein modification; protein ubiquitination. Functionally, E3 ubiquitin-protein ligase that negatively regulates water stress response. May control in coordination with PUB23 a drought signaling pathway by ubiquitinating cytosolic RPN12a. Acts as a negative regulator of the immunity triggered by the pathogen-associated molecular patterns (PAMPs), in association with PUB23 and PUB24. Regulates EXO70B2 ubiquitination and degradation via the 26S proteasome to attenuate PAMP-induced signaling. The polypeptide is E3 ubiquitin-protein ligase PUB22 (Arabidopsis thaliana (Mouse-ear cress)).